Consider the following 202-residue polypeptide: Thymidylate kinase (202 aa).

An ATP-binding site is contributed by 13-20; that stretch reads GTDGAGKS.

Belongs to the thymidylate kinase family.

It catalyses the reaction dTMP + ATP = dTDP + ADP. Functionally, phosphorylation of dTMP to form dTDP in both de novo and salvage pathways of dTTP synthesis. In Desulfotalea psychrophila (strain LSv54 / DSM 12343), this protein is Thymidylate kinase.